We begin with the raw amino-acid sequence, 157 residues long: Cysteine protease Nivulian-2 (157 aa).

It belongs to the intron maturase 2 family. MatK subfamily. As to quaternary structure, monomer. In terms of processing, glycosylated. As to expression, accumulates in latex (at protein level).

With respect to regulation, inhibited by HgCl(2), iodoacetamide (IAA) and, to a far lesser extent, by SDS, hydrogen peroxide H(1)O(2), KCl, NaCl, ZnCl(2), AgSO(4), CdCl(2), FeCl(3), PMSF, Pepstatin A and EDTA. Repressed moderately by many organic solvents such as diethyl ether, ethy lacetate, acetophenone, butanol, trichloroethylene, tetrahydrofuran, methanol, chloroform and dichloromethane, and, to a lesser extent, by propanol, benzyl alcohol and chlorobenzene. In terms of biological role, cysteine protease inducing milk clotting by cleaving casein. Exhibits biomedical activities such as wound healing, haemostatic and antibacterial activity, as well as agricultural application in biocontrol process against the infectious management of the root knot nematode Meloidogyne incognita. The chain is Cysteine protease Nivulian-2 from Euphorbia nivulia (Leafy milk hedge).